A 427-amino-acid polypeptide reads, in one-letter code: Trigger factor (427 aa).

The region spanning 163–248 (GDTVILDFEG…LHEIKTKEVP (86 aa)) is the PPIase FKBP-type domain.

This sequence belongs to the FKBP-type PPIase family. Tig subfamily.

It is found in the cytoplasm. The enzyme catalyses [protein]-peptidylproline (omega=180) = [protein]-peptidylproline (omega=0). In terms of biological role, involved in protein export. Acts as a chaperone by maintaining the newly synthesized protein in an open conformation. Functions as a peptidyl-prolyl cis-trans isomerase. This chain is Trigger factor, found in Listeria innocua serovar 6a (strain ATCC BAA-680 / CLIP 11262).